Here is a 366-residue protein sequence, read N- to C-terminus: Ribosomal RNA large subunit methyltransferase M (366 aa).

Residues Ser188, 221 to 224, Asp240, Asp260, and Asp277 contribute to the S-adenosyl-L-methionine site; that span reads CPGG. The Proton acceptor role is filled by Lys306.

This sequence belongs to the class I-like SAM-binding methyltransferase superfamily. RNA methyltransferase RlmE family. RlmM subfamily. As to quaternary structure, monomer.

The protein resides in the cytoplasm. The catalysed reaction is cytidine(2498) in 23S rRNA + S-adenosyl-L-methionine = 2'-O-methylcytidine(2498) in 23S rRNA + S-adenosyl-L-homocysteine + H(+). Catalyzes the 2'-O-methylation at nucleotide C2498 in 23S rRNA. The protein is Ribosomal RNA large subunit methyltransferase M of Escherichia coli O45:K1 (strain S88 / ExPEC).